The sequence spans 90 residues: U7-theraphotoxin-Hhn1a 7 (90 aa).

Positions 1-19 are cleaved as a signal peptide; it reads MKTAIFTVVLALAVFAVLS. The propeptide occupies 20-50; sequence FGWEANEKALSEGFTELIHEKEAASETEARE. 3 cysteine pairs are disulfide-bonded: Cys-51-Cys-65, Cys-58-Cys-70, and Cys-64-Cys-81.

This sequence belongs to the neurotoxin 10 (Hwtx-1) family. 13 (Hntx-13) subfamily. Expressed by the venom gland.

It is found in the secreted. Ion channel inhibitor. This chain is U7-theraphotoxin-Hhn1a 7, found in Cyriopagopus hainanus (Chinese bird spider).